A 1183-amino-acid chain; its full sequence is M-phase phosphoprotein 9 (1183 aa).

3 disordered regions span residues 28-52 (GLNL…SGKT), 300-334 (KLKQ…EKSD), and 472-495 (ISFS…SFSQ). The span at 324–334 (QSKKTPIEKSD) shows a compositional bias: basic and acidic residues. Positions 401–800 (TSNEMKLPSL…EAQVKQVEHE (400 aa)) are required for its centrosomal localization. Positions 451-500 (KPKQQISGIQPHGLPNALDDRISFSPDSVLEPSMSSPSDIDSFSQASNVT) are interaction with CEP97. The span at 483–495 (SMSSPSDIDSFSQ) shows a compositional bias: low complexity. Residues 609-804 (DLRAYYESEI…KQVEHENMLS (196 aa)) are a coiled coil. Phosphoserine; by TTBK2 is present on serine 781. A Glycyl lysine isopeptide (Lys-Gly) (interchain with G-Cter in ubiquitin) cross-link involves residue lysine 784. Serine 788 carries the post-translational modification Phosphoserine; by TTBK2. Residues 801–1031 (NMLSLRHNSR…PVSTLQRTNP (231 aa)) form an interaction with KIF24 region. 2 disordered regions span residues 863–894 (LGHR…SDTP) and 910–999 (NWGT…GFSH). Residues 921–936 (SNINPRQTETSVNASR) show a composition bias toward polar residues. Residues 949-967 (LNSASQRSSSLPPSNRKSS) show a composition bias toward low complexity. Serine 994 carries the phosphoserine modification. A coiled-coil region spans residues 1109–1174 (RTLAETERFF…GSVRMTLKKF (66 aa)).

As to quaternary structure, interacts with CCP110, CEP97 and KIF24. TTBK2-mediated phosphorylation at Ser-781 and Ser-788, promotes its ubiquitination at Lys-784 leading to proteasomal degradation, loss of MPHOSPH9 facilitates the removal of the CP110-CEP97 complex from the mother centrioles, promoting the initiation of ciliogenesis. Phosphorylated in M (mitotic) phase. Post-translationally, ubiquitinated at Lys-784, leading to proteasomal degradation.

The protein resides in the cytoplasm. It localises to the cytoskeleton. It is found in the microtubule organizing center. Its subcellular location is the centrosome. The protein localises to the centriole. The protein resides in the golgi apparatus membrane. Its function is as follows. Negatively regulates cilia formation by recruiting the CP110-CEP97 complex (a negative regulator of ciliogenesis) at the distal end of the mother centriole in ciliary cells. At the beginning of cilia formation, MPHOSPH9 undergoes TTBK2-mediated phosphorylation and degradation via the ubiquitin-proteasome system and removes itself and the CP110-CEP97 complex from the distal end of the mother centriole, which subsequently promotes cilia formation. The protein is M-phase phosphoprotein 9 (MPHOSPH9) of Homo sapiens (Human).